A 443-amino-acid polypeptide reads, in one-letter code: Serine transporter (443 aa).

Helical transmembrane passes span 38–60 (TGWV…PVQV), 65–87 (LWVF…RLFI), 111–131 (WGIL…FVYS), 150–170 (GLLS…VAIS), 183–203 (GMVL…VGMW), 215–235 (GLLV…ILFI), 265–285 (IAFG…TLAM), 319–339 (VSVI…YLGF), 368–388 (GIMI…APVL), 390–410 (FTSI…AWLV), and 422–442 (MSLY…FLAF).

It belongs to the amino acid/polyamine transporter 2 family. SdaC/TdcC subfamily.

It localises to the cell inner membrane. Its function is as follows. Transports both D- and L-serine; allows growth of strain CFT073 cells normally unable to transport D-serine on that substrate. Transport relies on the H(+) gradient and is not competed by L-threonine. May play a role in L-cysteine detoxification. The sequence is that of Serine transporter from Escherichia coli O157:H7.